Consider the following 232-residue polypeptide: 7-cyano-7-deazaguanine synthase (232 aa).

Position 7–17 (7–17 (CSGGLDSVSLA)) interacts with ATP. Positions 185, 193, 196, and 199 each coordinate Zn(2+).

The protein belongs to the QueC family. Zn(2+) is required as a cofactor.

It carries out the reaction 7-carboxy-7-deazaguanine + NH4(+) + ATP = 7-cyano-7-deazaguanine + ADP + phosphate + H2O + H(+). It participates in purine metabolism; 7-cyano-7-deazaguanine biosynthesis. Catalyzes the ATP-dependent conversion of 7-carboxy-7-deazaguanine (CDG) to 7-cyano-7-deazaguanine (preQ(0)). The sequence is that of 7-cyano-7-deazaguanine synthase from Brucella anthropi (strain ATCC 49188 / DSM 6882 / CCUG 24695 / JCM 21032 / LMG 3331 / NBRC 15819 / NCTC 12168 / Alc 37) (Ochrobactrum anthropi).